A 44-amino-acid chain; its full sequence is Phycoerythrin alpha-1 chain (44 aa).

The disordered stretch occupies residues 1–44 (AMDKSAKAPQITIFDHRGCSRAPKSETGGTATKDDQMMVKVSQV). Residue K4 is modified to 5-hydroxylysine. C19 and R21 together coordinate 15,16-dihydrobiliverdin. The segment at 24–26 (KSE) is 15,16-dihydrobiliverdin chromophore. K40 is a 15,16-dihydrobiliverdin binding site.

The protein belongs to the phycoerythrin family. In terms of assembly, heterotetramer of 2 different alpha chains and 2 identical beta chains. The subunit composition could comprise of any combination of 2 out of 4 different alpha units with an invariant beta unit. Post-translationally, contains one covalently linked 15,16-dihydrobiliverdin chromophore.

Its subcellular location is the plastid. The protein localises to the chloroplast thylakoid membrane. Light-harvesting photosynthetic tetrapyrrole chromophore-protein from the phycobiliprotein complex. This Rhodomonas sp. (strain CS 24) (Chroomonas sp. (strain CS24)) protein is Phycoerythrin alpha-1 chain (cpeA1).